A 113-amino-acid polypeptide reads, in one-letter code: Translation initiation factor 1A (113 aa).

Positions 12–87 (EVIRVPLPEG…KRGDIVYRYT (76 aa)) constitute an S1-like domain.

It belongs to the eIF-1A family.

Functionally, seems to be required for maximal rate of protein biosynthesis. Enhances ribosome dissociation into subunits and stabilizes the binding of the initiator Met-tRNA(I) to 40 S ribosomal subunits. In Pyrococcus abyssi (strain GE5 / Orsay), this protein is Translation initiation factor 1A (eIF1A).